We begin with the raw amino-acid sequence, 470 residues long: MAEVPHHNIPAVDMLNATSRLQLEAQELRNNKPNWGSYFRSQMIQEDDYNFITSFENAKSKEERDQVLAANNANGQAAKTMANLITQVAKDQNVRYVLTLFDDMLQEDKSRVELFHSAAARQKRTVWSQYLGILQRQDNFIVNQMSSIIAKLACFGTTRMEGQDLQYYFSFLKEQLKNSTTNDYMNTTARCLQMMLRHDEYRHEFVDSDGVQTLVTALNGKTNFQLQYQLIFAVWCLTFNADIARKAPSLGLIQALGDILSESTKEKVIRIILASFVNILSKVDEREVKREAALQMVQCKTLKTLELMDAKKYDDPDLEDDVKFLTEELTLSVHDLSSYDEYYSEVRSGRLQWSPVHKSEKFWRENASKFNDKQFEVVKILIKLLESSHDPLILCVASHDIGEYVRHYPRGKTVVEQYQGKAAVMRLLTAEDPNVRYHALLAVQKLMVHNWEYLGKQLDSDVQTDTVAVK.

Belongs to the V-ATPase H subunit family. In terms of assembly, V-ATPase is a heteromultimeric enzyme made up of two complexes: the ATP-hydrolytic V1 complex and the proton translocation V0 complex. The V1 complex consists of three catalytic AB heterodimers that form a heterohexamer, three peripheral stalks each consisting of EG heterodimers, one central rotor including subunits D and F, and the regulatory subunits C and H. The proton translocation complex V0 consists of the proton transport subunit a, a ring of proteolipid subunits c9c'', rotary subunit d, subunits e and f, and the accessory subunits vah-19/Ac45 and vah-20/PRR.

In terms of biological role, subunit of the V1 complex of vacuolar(H+)-ATPase (V-ATPase), a multisubunit enzyme composed of a peripheral complex (V1) that hydrolyzes ATP and a membrane integral complex (V0) that translocates protons. V-ATPase is responsible for acidifying and maintaining the pH of intracellular compartments and in some cell types, is targeted to the plasma membrane, where it is responsible for acidifying the extracellular environment. Subunit H is essential for V-ATPase activity, but not for the assembly of the complex. The protein is Probable V-type proton ATPase subunit H 2 of Caenorhabditis elegans.